Reading from the N-terminus, the 317-residue chain is MGERFHARTVRVKAPGKVNVSLSVGPLRPDGYHSVASVYLAVSLYEEVAATSTEAPGITVSISPDSTLDLDGVDIPLDQRNLAYKAAAIMAEMSEKPTGVHLEITKRVPVAGGMGGGSADAAATLLACDALWNSGLSREELAHLAAELGADVPFSLLGGTAVGLGVGDKLSPALAKAQMDWVLVFADYGLSTPDVFRTLDGLRDSEGVEIPEPVDVDPTILQALRKGDPETLSRVLINDLQRASITLAPQLRDTIGLGEARGALAGMVSGSGPTIALLARDSVSASVLAEELTHRGHNALAVHGPVPGARIISDTLL.

Residue Lys-17 is part of the active site. 109 to 119 (PVAGGMGGGSA) lines the ATP pocket. Asp-151 is a catalytic residue.

It belongs to the GHMP kinase family. IspE subfamily.

The catalysed reaction is 4-CDP-2-C-methyl-D-erythritol + ATP = 4-CDP-2-C-methyl-D-erythritol 2-phosphate + ADP + H(+). It functions in the pathway isoprenoid biosynthesis; isopentenyl diphosphate biosynthesis via DXP pathway; isopentenyl diphosphate from 1-deoxy-D-xylulose 5-phosphate: step 3/6. Catalyzes the phosphorylation of the position 2 hydroxy group of 4-diphosphocytidyl-2C-methyl-D-erythritol. The protein is 4-diphosphocytidyl-2-C-methyl-D-erythritol kinase of Paenarthrobacter aurescens (strain TC1).